Consider the following 311-residue polypeptide: tRNA dimethylallyltransferase 2 (311 aa).

G15–T22 is a binding site for ATP. Residue T17–T22 coordinates substrate. Residues D40 to Q43 are interaction with substrate tRNA.

Belongs to the IPP transferase family. As to quaternary structure, monomer. Mg(2+) is required as a cofactor.

The catalysed reaction is adenosine(37) in tRNA + dimethylallyl diphosphate = N(6)-dimethylallyladenosine(37) in tRNA + diphosphate. Functionally, catalyzes the transfer of a dimethylallyl group onto the adenine at position 37 in tRNAs that read codons beginning with uridine, leading to the formation of N6-(dimethylallyl)adenosine (i(6)A). The protein is tRNA dimethylallyltransferase 2 of Syntrophus aciditrophicus (strain SB).